Here is a 321-residue protein sequence, read N- to C-terminus: MKKGQLFIGALTCLVASMSWGAMFPVADHALEFVDPFYFSFIRYGVVTIMLVILLLVREGKKSFHLEGKAKWIILFGVMAFTIYNVLIFLGQRLMGKSGIMTASIAEALMPMLSIVILWGYKHVKPKKYTMISILIAFLGASMVITKGNISFFFSLGDHLFSILFIFIGVLGWVVYTMGGQIFREWSTLRYSTLTCLFGTAITGIMTAILTAQGYVSVPSIKVIAAIKYDFLFMITLPGIIALLSWNYGIKILSSINGILFINFVPITTLLIMVIKGYNITAFDIVGTLFVIIGLILNNIYQRKEDYKQVLQKEKTNLTIT.

The next 10 helical transmembrane spans lie at 6-26 (LFIG…MFPV), 37-57 (FYFS…LLLV), 72-92 (WIIL…FLGQ), 100-120 (IMTA…ILWG), 134-154 (ILIA…SFFF), 160-180 (LFSI…TMGG), 196-216 (CLFG…QGYV), 223-243 (VIAA…IIAL), 255-275 (SING…IMVI), and 277-297 (GYNI…GLIL). EamA domains are found at residues 18 to 146 (MSWG…MVIT) and 175 to 300 (VYTM…LNNI).

The protein belongs to the EamA transporter family.

The protein localises to the cell membrane. This is an uncharacterized protein from Bacillus subtilis (strain 168).